The sequence spans 247 residues: Histone acetyltransferase MCC1 (247 aa).

The 174-residue stretch at 25-198 folds into the N-acetyltransferase domain; that stretch reads IHYRPINPND…DAFLFVYFIN (174 aa).

It belongs to the acetyltransferase family.

The enzyme catalyses L-lysyl-[protein] + acetyl-CoA = N(6)-acetyl-L-lysyl-[protein] + CoA + H(+). Its function is as follows. Histone acetyltransferase that probably regulates acetylation status of histone H3 during meiosis. Histone acetylation may influence recombination and chromosome segregation. In Arabidopsis thaliana (Mouse-ear cress), this protein is Histone acetyltransferase MCC1 (MCC1).